The sequence spans 203 residues: Holliday junction branch migration complex subunit RuvA (203 aa).

Residues 1-63 (MIDYLRGTLT…EDVIRLYGFR (63 aa)) are domain I. Residues 64–142 (TKEKRSLFEK…ELHPGLFSQK (79 aa)) form a domain II region. The tract at residues 143–152 (EEQPKPHEKN) is flexible linker. The interval 153–203 (DGNQALDEAMEALKALGYVEKELKKVKPKLEQETLTTDAYIKKALQLMLNR) is domain III.

Belongs to the RuvA family. In terms of assembly, homotetramer. Forms an RuvA(8)-RuvB(12)-Holliday junction (HJ) complex. HJ DNA is sandwiched between 2 RuvA tetramers; dsDNA enters through RuvA and exits via RuvB. An RuvB hexamer assembles on each DNA strand where it exits the tetramer. Each RuvB hexamer is contacted by two RuvA subunits (via domain III) on 2 adjacent RuvB subunits; this complex drives branch migration. In the full resolvosome a probable DNA-RuvA(4)-RuvB(12)-RuvC(2) complex forms which resolves the HJ.

It is found in the cytoplasm. The RuvA-RuvB-RuvC complex processes Holliday junction (HJ) DNA during genetic recombination and DNA repair, while the RuvA-RuvB complex plays an important role in the rescue of blocked DNA replication forks via replication fork reversal (RFR). RuvA specifically binds to HJ cruciform DNA, conferring on it an open structure. The RuvB hexamer acts as an ATP-dependent pump, pulling dsDNA into and through the RuvAB complex. HJ branch migration allows RuvC to scan DNA until it finds its consensus sequence, where it cleaves and resolves the cruciform DNA. This Halalkalibacterium halodurans (strain ATCC BAA-125 / DSM 18197 / FERM 7344 / JCM 9153 / C-125) (Bacillus halodurans) protein is Holliday junction branch migration complex subunit RuvA.